Consider the following 313-residue polypeptide: tRNA dimethylallyltransferase (313 aa).

ATP is bound at residue 11 to 18; sequence GPTASGKT. 13 to 18 serves as a coordination point for substrate; sequence TASGKT. 2 interaction with substrate tRNA regions span residues 36 to 39 and 160 to 164; these read DSRQ and QRLIR.

The protein belongs to the IPP transferase family. As to quaternary structure, monomer. Requires Mg(2+) as cofactor.

The enzyme catalyses adenosine(37) in tRNA + dimethylallyl diphosphate = N(6)-dimethylallyladenosine(37) in tRNA + diphosphate. Functionally, catalyzes the transfer of a dimethylallyl group onto the adenine at position 37 in tRNAs that read codons beginning with uridine, leading to the formation of N6-(dimethylallyl)adenosine (i(6)A). The chain is tRNA dimethylallyltransferase from Chlorobaculum parvum (strain DSM 263 / NCIMB 8327) (Chlorobium vibrioforme subsp. thiosulfatophilum).